The primary structure comprises 1040 residues: Nucleotide-binding oligomerization domain-containing protein 2 (1040 aa).

CARD domains are found at residues 26–122 and 126–218; these read CEMC…LHGC and HSLH…EAAT. The ATG16L1-binding motif motif lies at 63-77; it reads WEVLSWEDYEGFHLL. Thr-239, Tyr-252, Thr-253, Gly-302, Ser-303, Gly-304, Lys-305, Ser-306, and Thr-307 together coordinate ADP. A required for CARD9 binding region spans residues 241–274; it reads DGAETLCLEDIYTENVLEVWADVGMAGPPQKSPA. The NACHT domain occupies 293-618; it reads DTVLVVGEAG…FFAAFYLALS (326 aa). 299-306 lines the ATP pocket; sequence GEAGSGKS. Cys-395 carries the S-palmitoyl cysteine lipid modification. His-603 serves as a coordination point for ADP. LRR repeat units follow at residues 791-812, 816-839, 844-865, 872-884, 900-920, 928-949, 956-976, 984-1005, and 1012-1032; these read RPVA…QLLP, VCKA…IECA, QLQK…SMAK, NFLA…NYIT, SLQF…QALA, SLRW…ALAL, MLEE…CSLA, SLKI…ALLQ, and TILE…DKLG. Cys-1033 carries the S-palmitoyl cysteine lipid modification.

Belongs to the NOD1-NOD2 family. Homooligomer: homooligomerizes following muramyl dipeptide (MDP)-binding, promoting RIPK2 recruitment. Interacts (via CARD domain) with RIPK2 (via CARD domain). Following RIPK2 recruitment, RIPK2 homooligomerizes via its CARD domain and forms long filaments named RIPosomes. Interacts (via CARD domain) with ubiquitin; inhibiting interaction with RIPK2. Component of a signaling complex consisting of ARHGEF2, NOD2 and RIPK2. Interacts with ANKRD17 (via N-terminus). Interacts with HSPA1A; the interaction enhances NOD2 stability. Interacts (via both CARD domains) with HSP90; the interaction enhances NOD2 stability. Interacts (via CARD domain) with SOCS3; the interaction promotes NOD2 degradation. Interacts (via CARD domain) with ERBIN; the interaction inhibits activation of NOD2. Interacts with MAPKBP1; the interaction is enhanced in the presence of muramyl dipeptide (MDP) and inhibits NOD2 homooligomerization and activation. Interacts with INAVA; the interaction takes place upon Pattern recognition receptor (PRR) stimulation. Interacts (via NACHT domain) with CARD9. Interacts (via CARD domain) with CASP1; this interaction leads to IL1B processing. Also interacts with CASP4. Interacts with NLRP1; this interaction is enhanced in the presence of muramyl dipeptide (MDP) and leads to increased IL1B release. Interacts with NLRP12; this interaction promotes degradation of NOD2 through the ubiquitin-proteasome pathway. Interacts with ANKHD1, C10orf67, CHMP5, DOCK7, ENTR1, KRT15, LDOC1, PPP1R12C, PPP2R3B, TRIM41 and VIM. Interacts with MAVS; interaction takes place following single-stranded RNA (ssRNA)-binding. Interacts with ATG16L1. Interacts with IRGM; promoting IRGM 'Lys-63'-linked polyubiquitination, which is required for interactions with the core autophagy factors. Palmitoylated by ZDHHC5; palmitoylation is required for proper recruitment to the bacterial entry site and hence for proper signaling upon cognate peptidoglycan detection. Palmitoylation promotes localization to the cell membrane. Palmitoylation protects from SQSTM1/p62-dependent autophagic degradation. Post-translationally, polyubiquitinated by TRIM27, leading to proteasome-mediated degradation. Polyubiquitinated and degraded following muramyl dipeptide (MDP) stimulation, conferring MDP tolerance and preventing septic shock. In terms of processing, degraded via selective autophagy following interaction with IRGM. IRGM promotes NOD2-RIPK2 RIPosome recruitment to autophagosome membranes, promoting their SQSTM1/p62-dependent autophagic degradation. O-glycosylated by OGT, O-GlcNAcylation increases protein stability. In terms of tissue distribution, expressed in monocytes, macrophages, dendritic cells, hepatocytes, preadipocytes, epithelial cells of oral cavity, lung and intestine, with higher expression in ileal Paneth cells and in intestinal stem cells. As to expression, expressed at higher level in leukocytes.

It localises to the cell membrane. The protein localises to the basolateral cell membrane. The protein resides in the cytoplasm. Its subcellular location is the mitochondrion. ADP-binding promotes an inactive closed conformation. Functionally, pattern recognition receptor (PRR) that detects bacterial peptidoglycan fragments and other danger signals and plays an important role in gastrointestinal immunity. Specifically activated by muramyl dipeptide (MDP), a fragment of bacterial peptidoglycan found in every bacterial peptidoglycan type. NOD2 specifically recognizes and binds 6-O-phospho-MDP, the phosphorylated form of MDP, which is generated by NAGK. 6-O-phospho-MDP-binding triggers oligomerization that facilitates the binding and subsequent activation of the proximal adapter receptor-interacting RIPK2. Following recruitment, RIPK2 undergoes 'Met-1'- (linear) and 'Lys-63'-linked polyubiquitination by E3 ubiquitin-protein ligases XIAP, BIRC2, BIRC3 and the LUBAC complex, becoming a scaffolding protein for downstream effectors, triggering activation of the NF-kappa-B and MAP kinases signaling. This in turn leads to the transcriptional activation of hundreds of genes involved in immune response. Its ability to detect bacterial MDP plays a central role in maintaining the equilibrium between intestinal microbiota and host immune responses to control inflammation. An imbalance in this relationship results in dysbiosis, whereby pathogenic bacteria prevail on commensals, causing damage in the intestinal epithelial barrier as well as allowing bacterial invasion and inflammation. Acts as a regulator of appetite by sensing MDP in a subset of brain neurons: microbiota-derived MDP reach the brain, where they bind and activate NOD2 in inhibitory hypothalamic neurons, decreasing neuronal activity, thereby regulating satiety and body temperature. NOD2-dependent MDP-sensing of bacterial cell walls in the intestinal epithelial compartment contributes to sustained postnatal growth upon undernutrition. Also plays a role in antiviral response by acting as a sensor of single-stranded RNA (ssRNA) from viruses: upon ssRNA-binding, interacts with MAVS, leading to activation of interferon regulatory factor-3/IRF3 and expression of type I interferon. Also acts as a regulator of autophagy in dendritic cells via its interaction with ATG16L1, possibly by recruiting ATG16L1 at the site of bacterial entry. NOD2 activation in the small intestine crypt also contributes to intestinal stem cells survival and function: acts by promoting mitophagy via its association with ATG16L1. In addition to its main role in innate immunity, also regulates the adaptive immune system by acting as regulator of helper T-cell and regulatory T-cells (Tregs). Besides recognizing pathogens, also involved in the endoplasmic reticulum stress response: acts by sensing and binding to the cytosolic metabolite sphingosine-1-phosphate generated in response to endoplasmic reticulum stress, initiating an inflammation process that leads to activation of the NF-kappa-B and MAP kinases signaling. May also be involved in NLRP1 activation following activation by MDP, leading to CASP1 activation and IL1B release in macrophages. Acts as a pattern recognition receptor (PRR); able to activate NF-kappa-B. Its function is as follows. Can activate NF-kappa-B in a muramyl dipeptide (MDP)-independent manner. The polypeptide is Nucleotide-binding oligomerization domain-containing protein 2 (Homo sapiens (Human)).